We begin with the raw amino-acid sequence, 447 residues long: Rab GDP dissociation inhibitor alpha (447 aa).

Ser427 is modified (phosphoserine).

This sequence belongs to the Rab GDI family. As to quaternary structure, interacts with RHOH. Interacts with the non-phosphorylated forms of RAB1A, RAB3A, RAB5A, RAB5B, RAB5C, RAB8A, RAB8B, RAB10, RAB12, RAB35, and RAB43. High expression in brain, lower in other tissues.

It is found in the cytoplasm. It localises to the golgi apparatus. Its subcellular location is the trans-Golgi network. In terms of biological role, regulates the GDP/GTP exchange reaction of most Rab proteins by inhibiting the dissociation of GDP from them, and the subsequent binding of GTP to them. Promotes the dissociation of GDP-bound Rab proteins from the membrane and inhibits their activation. Promotes the dissociation of RAB1A, RAB3A, RAB5A and RAB10 from membranes. This Rattus norvegicus (Rat) protein is Rab GDP dissociation inhibitor alpha (Gdi1).